The following is a 571-amino-acid chain: Sulfite reductase [NADPH] hemoprotein beta-component (571 aa).

[4Fe-4S] cluster contacts are provided by C436, C442, C481, and C485. C485 contacts siroheme.

Belongs to the nitrite and sulfite reductase 4Fe-4S domain family. In terms of assembly, alpha(8)-beta(8). The alpha component is a flavoprotein, the beta component is a hemoprotein. Requires siroheme as cofactor. The cofactor is [4Fe-4S] cluster.

It catalyses the reaction hydrogen sulfide + 3 NADP(+) + 3 H2O = sulfite + 3 NADPH + 4 H(+). The protein operates within sulfur metabolism; hydrogen sulfide biosynthesis; hydrogen sulfide from sulfite (NADPH route): step 1/1. Component of the sulfite reductase complex that catalyzes the 6-electron reduction of sulfite to sulfide. This is one of several activities required for the biosynthesis of L-cysteine from sulfate. This chain is Sulfite reductase [NADPH] hemoprotein beta-component, found in Anoxybacillus flavithermus (strain DSM 21510 / WK1).